The sequence spans 422 residues: Vitellogenin-2 (422 aa).

An N-terminal signal peptide occupies residues 1-20 (MNPLTIFCLVAVLLSAATAH). Disordered stretches follow at residues 161–191 (QGEQ…KPNG) and 399–422 (FGKS…GRPN). Residues 180 to 189 (NRPNGQQPKP) show a composition bias toward polar residues.

This sequence belongs to the AB hydrolase superfamily. Lipase family. Synthesized in the fat body and ovarian follicle cells and accumulate in the oocyte.

It localises to the secreted. Vitellogenin is the major yolk protein of eggs where it is used as a food source during embryogenesis. The chain is Vitellogenin-2 (VG2-delta) from Ceratitis capitata (Mediterranean fruit fly).